The sequence spans 206 residues: Ribonuclease HII (206 aa).

Residues 1-206 (MKVLGIDEAG…SWATVQKKKQ (206 aa)) form the RNase H type-2 domain. Residues Asp7, Glu8, and Asp105 each coordinate a divalent metal cation.

Belongs to the RNase HII family. It depends on Mn(2+) as a cofactor. Mg(2+) is required as a cofactor.

It localises to the cytoplasm. The enzyme catalyses Endonucleolytic cleavage to 5'-phosphomonoester.. In terms of biological role, endonuclease that specifically degrades the RNA of RNA-DNA hybrids. In Methanothermobacter thermautotrophicus (strain ATCC 29096 / DSM 1053 / JCM 10044 / NBRC 100330 / Delta H) (Methanobacterium thermoautotrophicum), this protein is Ribonuclease HII (rnhB).